The primary structure comprises 445 residues: Histidinol dehydrogenase (445 aa).

Tyr134, Gln198, and Asn226 together coordinate NAD(+). Substrate contacts are provided by Thr249, Gln271, and His274. Gln271 and His274 together coordinate Zn(2+). Catalysis depends on proton acceptor residues Glu340 and His341. Residues His341, Asp374, Glu428, and His433 each contribute to the substrate site. Zn(2+) is bound at residue Asp374. Zn(2+) is bound at residue His433.

It belongs to the histidinol dehydrogenase family. It depends on Zn(2+) as a cofactor.

The catalysed reaction is L-histidinol + 2 NAD(+) + H2O = L-histidine + 2 NADH + 3 H(+). It functions in the pathway amino-acid biosynthesis; L-histidine biosynthesis; L-histidine from 5-phospho-alpha-D-ribose 1-diphosphate: step 9/9. Its function is as follows. Catalyzes the sequential NAD-dependent oxidations of L-histidinol to L-histidinaldehyde and then to L-histidine. The polypeptide is Histidinol dehydrogenase (Nocardia farcinica (strain IFM 10152)).